Consider the following 182-residue polypeptide: LIM domain-containing protein C (182 aa).

LIM zinc-binding domains are found at residues 3–63 (SICP…LFRQ) and 110–170 (TNCP…KFGP).

It localises to the cell projection. The protein localises to the pseudopodium. The protein resides in the cytoplasm. It is found in the cell cortex. Its subcellular location is the cytoskeleton. In terms of biological role, binds to F-actin and may modulate the chemotactic response during early development and contribute to the maintenance of the strength of the actin cytoskeleton. This is LIM domain-containing protein C (limC) from Dictyostelium discoideum (Social amoeba).